Consider the following 195-residue polypeptide: MVRHASISRTTKETDIQLQFVIDGEGKAELDTGVPFLTHMLDLFTKHGQFNLTVTAKGDTEVDDHHTTEDIGICLGQALREALGDKKGIKRYGNAFVPMDEALAQVIVDLSNRPHFEFRGEFPSEKVGTFDVELVHEFLWKLALEARMNLHVIVHYGRNTHHMIEAVFKALGRALDEATMIDPRVKGVPSTKGML.

Belongs to the imidazoleglycerol-phosphate dehydratase family.

The protein resides in the cytoplasm. It carries out the reaction D-erythro-1-(imidazol-4-yl)glycerol 3-phosphate = 3-(imidazol-4-yl)-2-oxopropyl phosphate + H2O. The protein operates within amino-acid biosynthesis; L-histidine biosynthesis; L-histidine from 5-phospho-alpha-D-ribose 1-diphosphate: step 6/9. The sequence is that of Imidazoleglycerol-phosphate dehydratase from Geobacillus sp. (strain WCH70).